Here is a 251-residue protein sequence, read N- to C-terminus: Triosephosphate isomerase (251 aa).

9–11 (NWK) lines the substrate pocket. Residue His95 is the Electrophile of the active site. Residue Glu167 is the Proton acceptor of the active site. Residues Gly173, Ser212, and 233-234 (GG) contribute to the substrate site.

This sequence belongs to the triosephosphate isomerase family. As to quaternary structure, homodimer.

The protein resides in the cytoplasm. The enzyme catalyses D-glyceraldehyde 3-phosphate = dihydroxyacetone phosphate. Its pathway is carbohydrate biosynthesis; gluconeogenesis. It functions in the pathway carbohydrate degradation; glycolysis; D-glyceraldehyde 3-phosphate from glycerone phosphate: step 1/1. In terms of biological role, involved in the gluconeogenesis. Catalyzes stereospecifically the conversion of dihydroxyacetone phosphate (DHAP) to D-glyceraldehyde-3-phosphate (G3P). The sequence is that of Triosephosphate isomerase from Pseudomonas aeruginosa (strain LESB58).